The following is a 192-amino-acid chain: Putative integrase/recombinase y4gC (192 aa).

The 183-residue stretch at 1–183 folds into the Tyr recombinase domain; the sequence is MPSILERDQI…ATEDLRAIAL (183 aa). Active-site residues include Arg-41, Lys-66, His-135, Arg-138, and His-161. Tyr-170 functions as the O-(3'-phospho-DNA)-tyrosine intermediate in the catalytic mechanism.

The protein belongs to the 'phage' integrase family.

The chain is Putative integrase/recombinase y4gC from Sinorhizobium fredii (strain NBRC 101917 / NGR234).